A 602-amino-acid polypeptide reads, in one-letter code: NAD-dependent protein deacetylase sir-2.1 (602 aa).

Residues 25-57 form a disordered region; sequence PEIETMHIENSVEGESGRQRTESTASVNSESWQ. Polar residues predominate over residues 46 to 57; sequence ESTASVNSESWQ. In terms of domain architecture, Deacetylase sirtuin-type spans 119–374; the sequence is KLFTYNSLSD…RDICYALGGS (256 aa). NAD(+)-binding positions include 144–163 and 228–231; these read GAGV…DGIY and QNID. His246 serves as the catalytic Proton acceptor. Positions 254, 257, 278, and 281 each coordinate Zn(2+). NAD(+) is bound by residues 318–320, 343–345, and Cys360; these read GSS and NRE. 2 disordered regions span residues 411 to 468 and 520 to 551; these read QERR…SDEV and RNRH…RSQS.

It belongs to the sirtuin family. Class I subfamily. As to quaternary structure, interacts with ftt-2 and par-5. Interacts with daf-16 following heat-shock, which causes daf-16 to accumulate in the nucleus. Interaction with daf-16 is promoted by ftt-2. It depends on Zn(2+) as a cofactor.

The protein localises to the nucleus. The catalysed reaction is N(6)-acetyl-L-lysyl-[protein] + NAD(+) + H2O = 2''-O-acetyl-ADP-D-ribose + nicotinamide + L-lysyl-[protein]. Its function is as follows. NAD-dependent deacetylase. Required for a reduction of the 'Lys-16' acetylation of histone H4 (H4K16ac) on dosage-compensated X chromosomes in hermaphrodites. Functions upstream of daf-16 in the insulin-like signaling pathway, promoting daf-16 mediated transcriptional activation and increased life-span. May also regulate life-span independently of daf-16 by modulating the transcription of genes involved in the stress response of the endoplasmic reticulum (ER). Acts upstream of the nicotinic acid metabolism pathway, which may be linked to the regulation of longevity. Plays a role in ascaroside-mediated longevity and stress resistance. This is NAD-dependent protein deacetylase sir-2.1 (sir-2.1) from Caenorhabditis briggsae.